A 315-amino-acid chain; its full sequence is Protein OPG185 (315 aa).

Positions 1–16 (MTRLPILLLLISLVYA) are cleaved as a signal peptide. An Ig-like V-type domain is found at 17–121 (TPFPQTSKKI…NDTDKVDYEE (105 aa)). At 17-279 (TPFPQTSKKI…SNYKTKDFVE (263 aa)) the chain is on the virion surface side. A disulfide bond links Cys-34 and Cys-103. 4 N-linked (GlcNAc...) asparagine; by host glycosylation sites follow: Asn-37, Asn-69, Asn-112, and Asn-161. A disordered region spans residues 194–213 (TVSATSGESTTDETPEPITD). Asn-254 carries an N-linked (GlcNAc...) asparagine; by host glycan. A helical membrane pass occupies residues 280-303 (IFGITALIILSAVAIFCITYYICN). The Intravirion portion of the chain corresponds to 304–315 (KRSRKYKTENKV).

This sequence belongs to the orthopoxvirus OPG185 family. Heterodimerizes with OPG040. The heterodimer OPG185-OPG040 interacts with components of the entry fusion complex OPG143 and OPG094. Heterodimer with C3/VPC protein; disulfide-linked. In terms of processing, glycosylated; contains phosphate and sulfate-substituted glycans. O-glycosylation is required for hemagglutination and hemadsorption activities of infected cell membranes.

Its subcellular location is the virion membrane. It is found in the host membrane. Functionally, prevents cell to cell fusion by interacting with and directing the viral OPG040 protein on the host plasma membrane. The OPG185-OPG040 complex associates with components of the entry fusion complex (EFC) presumably to avoid superinfection and syncytium formation. Via its interaction with C3/VCP protein, protects the infected cell and probably also the extracellular enveloped virus from complement attack. The protein is Protein OPG185 (OPG185) of Vaccinia virus (strain Copenhagen) (VACV).